Reading from the N-terminus, the 692-residue chain is Bifunctional uridylyltransferase/uridylyl-removing enzyme (692 aa).

The interval M1 to P270 is uridylyltransferase. Residues L271–S692 are uridylyl-removing. Residues I383–D484 enclose the HD domain.

It belongs to the GlnD family. Mg(2+) serves as cofactor.

The enzyme catalyses [protein-PII]-L-tyrosine + UTP = [protein-PII]-uridylyl-L-tyrosine + diphosphate. It carries out the reaction [protein-PII]-uridylyl-L-tyrosine + H2O = [protein-PII]-L-tyrosine + UMP + H(+). With respect to regulation, uridylyltransferase (UTase) activity is inhibited by glutamine, while glutamine activates uridylyl-removing (UR) activity. Its function is as follows. Modifies, by uridylylation and deuridylylation, the PII regulatory proteins (GlnB and homologs), in response to the nitrogen status of the cell that GlnD senses through the glutamine level. Under low glutamine levels, catalyzes the conversion of the PII proteins and UTP to PII-UMP and PPi, while under higher glutamine levels, GlnD hydrolyzes PII-UMP to PII and UMP (deuridylylation). Thus, controls uridylylation state and activity of the PII proteins, and plays an important role in the regulation of nitrogen assimilation and metabolism. The protein is Bifunctional uridylyltransferase/uridylyl-removing enzyme (glnD) of Corynebacterium glutamicum (strain ATCC 13032 / DSM 20300 / JCM 1318 / BCRC 11384 / CCUG 27702 / LMG 3730 / NBRC 12168 / NCIMB 10025 / NRRL B-2784 / 534).